The chain runs to 455 residues: Exodeoxyribonuclease 7 large subunit (455 aa).

It belongs to the XseA family. As to quaternary structure, heterooligomer composed of large and small subunits.

The protein resides in the cytoplasm. The enzyme catalyses Exonucleolytic cleavage in either 5'- to 3'- or 3'- to 5'-direction to yield nucleoside 5'-phosphates.. Bidirectionally degrades single-stranded DNA into large acid-insoluble oligonucleotides, which are then degraded further into small acid-soluble oligonucleotides. The protein is Exodeoxyribonuclease 7 large subunit of Escherichia coli O7:K1 (strain IAI39 / ExPEC).